Here is a 486-residue protein sequence, read N- to C-terminus: Malonate-semialdehyde dehydrogenase (486 aa).

5 residues coordinate NAD(+): Phe-154, Lys-178, Glu-181, Arg-182, and Ser-231. Cys-286 (nucleophile) is an active-site residue. Glu-386 is a binding site for NAD(+).

This sequence belongs to the aldehyde dehydrogenase family. IolA subfamily. As to quaternary structure, homotetramer.

The enzyme catalyses 3-oxopropanoate + NAD(+) + CoA + H2O = hydrogencarbonate + acetyl-CoA + NADH + H(+). It catalyses the reaction 2-methyl-3-oxopropanoate + NAD(+) + CoA + H2O = propanoyl-CoA + hydrogencarbonate + NADH + H(+). The protein operates within polyol metabolism; myo-inositol degradation into acetyl-CoA; acetyl-CoA from myo-inositol: step 7/7. In terms of biological role, catalyzes the oxidation of malonate semialdehyde (MSA) and methylmalonate semialdehyde (MMSA) into acetyl-CoA and propanoyl-CoA, respectively. Is involved in a myo-inositol catabolic pathway. Bicarbonate, and not CO2, is the end-product of the enzymatic reaction. The polypeptide is Malonate-semialdehyde dehydrogenase (Bacillus cytotoxicus (strain DSM 22905 / CIP 110041 / 391-98 / NVH 391-98)).